Here is a 241-residue protein sequence, read N- to C-terminus: Small ribosomal subunit protein uS2 (241 aa).

The protein belongs to the universal ribosomal protein uS2 family.

This chain is Small ribosomal subunit protein uS2, found in Hamiltonella defensa subsp. Acyrthosiphon pisum (strain 5AT).